The sequence spans 277 residues: Large ribosomal subunit protein uL2 (277 aa).

2 disordered regions span residues 28-55 (EPEK…RHRG) and 207-277 (KAGR…RTQG). Composition is skewed to basic residues over residues 34-43 (THHKHSKQGR), 209-220 (GRTRHRGQRPHV), and 255-265 (LGRKTRNKKKR).

Belongs to the universal ribosomal protein uL2 family. As to quaternary structure, part of the 50S ribosomal subunit. Forms a bridge to the 30S subunit in the 70S ribosome.

One of the primary rRNA binding proteins. Required for association of the 30S and 50S subunits to form the 70S ribosome, for tRNA binding and peptide bond formation. It has been suggested to have peptidyltransferase activity; this is somewhat controversial. Makes several contacts with the 16S rRNA in the 70S ribosome. In Microcystis aeruginosa (strain NIES-843 / IAM M-2473), this protein is Large ribosomal subunit protein uL2.